A 281-amino-acid polypeptide reads, in one-letter code: Probable endonuclease 4 (281 aa).

Zn(2+)-binding residues include histidine 69, histidine 109, glutamate 145, aspartate 179, histidine 182, histidine 216, aspartate 229, histidine 231, and glutamate 261.

Belongs to the AP endonuclease 2 family. It depends on Zn(2+) as a cofactor.

The enzyme catalyses Endonucleolytic cleavage to 5'-phosphooligonucleotide end-products.. In terms of biological role, endonuclease IV plays a role in DNA repair. It cleaves phosphodiester bonds at apurinic or apyrimidinic (AP) sites, generating a 3'-hydroxyl group and a 5'-terminal sugar phosphate. The chain is Probable endonuclease 4 from Pectobacterium carotovorum subsp. carotovorum (strain PC1).